We begin with the raw amino-acid sequence, 380 residues long: Sialidase-2 (380 aa).

An FRIP motif motif is present at residues 20–23 (YRIP). Arg-21 and Arg-41 together coordinate substrate. Residue Asp-46 is the Proton acceptor of the active site. A BNR 1 repeat occupies 127–138 (VTSTDHGRTWSS). The substrate site is built by Tyr-179 and Tyr-181. Residues 197 to 208 (FLSHDHGRTWAR) form a BNR 2 repeat. The substrate site is built by Glu-218, Arg-237, and Arg-304. Tyr-334 (nucleophile) is an active-site residue. Residue Glu-355 is part of the active site.

The protein belongs to the glycosyl hydrolase 33 family. In terms of tissue distribution, expressed in skeletal muscle, fetal liver and embryonic carcinoma cell line NT2-D1.

Its subcellular location is the cytoplasm. It localises to the cytosol. It catalyses the reaction Hydrolysis of alpha-(2-&gt;3)-, alpha-(2-&gt;6)-, alpha-(2-&gt;8)- glycosidic linkages of terminal sialic acid residues in oligosaccharides, glycoproteins, glycolipids, colominic acid and synthetic substrates.. The enzyme catalyses a ganglioside GD1a + H2O = a ganglioside GM1 + N-acetylneuraminate. The catalysed reaction is a ganglioside GM1 + H2O = a ganglioside GA1 + N-acetylneuraminate. It carries out the reaction a ganglioside GT1b + H2O = a ganglioside GD1b + N-acetylneuraminate. It catalyses the reaction a ganglioside GD1b + H2O = a ganglioside GM1 + N-acetylneuraminate. The enzyme catalyses a ganglioside GD3 + H2O = a ganglioside GM3 + N-acetylneuraminate. The catalysed reaction is a ganglioside GM3 + H2O = a beta-D-galactosyl-(1-&gt;4)-beta-D-glucosyl-(1&lt;-&gt;1)-ceramide + N-acetylneuraminate. It carries out the reaction a ganglioside GM2 + H2O = a ganglioside GA2 + N-acetylneuraminate. It catalyses the reaction a neolactoside IV(3)-alpha-NeuAc-nLc4Cer(d18:1(4E)) + H2O = a neolactoside nLc4Cer(d18:1(4E)) + N-acetylneuraminate. The enzyme catalyses N-acetyl-alpha-neuraminosyl-(2-&gt;3)-beta-D-galactosyl-(1-&gt;4)-D-glucose + H2O = lactose + N-acetylneuraminate. Its function is as follows. Exo-alpha-sialidase that catalyzes the hydrolytic cleavage of the terminal sialic acid (N-acetylneuraminic acid, Neu5Ac) of a glycan moiety in the catabolism of glycolipids, glycoproteins and oligosacharides. Recognizes sialyl linkage positions of the glycan moiety as well as the supramolecular organization of the sialoglycoconjugate. Displays preference for alpha-(2-&gt;3)-sialylated GD1a and GT1B gangliosides over alpha-(2-&gt;8)-sialylated GD1b, in both monomeric forms and micelles. Hydrolyzes monomeric GM1 ganglioside, but has no activity toward the miscellar form. Has lower sialidase activity for glycoproteins such as fetuin and TF/transferrin that carry a mixture of alpha-(2-&gt;3) and alpha-(2-&gt;6)-sialyl linkages. Cleaves milk oligosaccharide alpha-(2-&gt;3)-sialyllactose, but is inactive toward alpha-(2-&gt;6)-sialyllactose isomer. Has no activity toward colominic acid, a homomer of alpha-(2-&gt;8)-linked Neu5Ac residues. This Homo sapiens (Human) protein is Sialidase-2 (NEU2).